The chain runs to 222 residues: Pleckstrin homology domain-containing family B member 2 (222 aa).

The PH domain maps to alanine 2 to threonine 109. An a 1,2-diacyl-sn-glycero-3-phospho-L-serine-binding site is contributed by lysine 20.

Its subcellular location is the recycling endosome membrane. Involved in retrograde transport of recycling endosomes. The protein is Pleckstrin homology domain-containing family B member 2 (PLEKHB2) of Homo sapiens (Human).